Consider the following 445-residue polypeptide: Phosphoglucosamine mutase 1 (445 aa).

The active-site Phosphoserine intermediate is the Ser-102. Residues Ser-102, Asp-241, Asp-243, and Asp-245 each contribute to the Mg(2+) site. Ser-102 is subject to Phosphoserine.

This sequence belongs to the phosphohexose mutase family. Requires Mg(2+) as cofactor. Post-translationally, activated by phosphorylation.

The enzyme catalyses alpha-D-glucosamine 1-phosphate = D-glucosamine 6-phosphate. Its function is as follows. Catalyzes the conversion of glucosamine-6-phosphate to glucosamine-1-phosphate. The sequence is that of Phosphoglucosamine mutase 1 from Shewanella sp. (strain MR-4).